The primary structure comprises 384 residues: 1-deoxy-D-xylulose 5-phosphate reductoisomerase (384 aa).

The NADPH site is built by threonine 10, glycine 11, serine 12, isoleucine 13, glycine 36, asparagine 38, and asparagine 122. Lysine 123 contacts 1-deoxy-D-xylulose 5-phosphate. Glutamate 124 contributes to the NADPH binding site. Aspartate 148 contributes to the Mn(2+) binding site. 1-deoxy-D-xylulose 5-phosphate contacts are provided by serine 149, glutamate 150, serine 174, and histidine 197. Glutamate 150 is a Mn(2+) binding site. Glycine 203 contacts NADPH. Residues serine 210, asparagine 215, lysine 216, and glutamate 219 each contribute to the 1-deoxy-D-xylulose 5-phosphate site. Glutamate 219 contacts Mn(2+).

This sequence belongs to the DXR family. The cofactor is Mg(2+). It depends on Mn(2+) as a cofactor.

It carries out the reaction 2-C-methyl-D-erythritol 4-phosphate + NADP(+) = 1-deoxy-D-xylulose 5-phosphate + NADPH + H(+). Its pathway is isoprenoid biosynthesis; isopentenyl diphosphate biosynthesis via DXP pathway; isopentenyl diphosphate from 1-deoxy-D-xylulose 5-phosphate: step 1/6. Its function is as follows. Catalyzes the NADPH-dependent rearrangement and reduction of 1-deoxy-D-xylulose-5-phosphate (DXP) to 2-C-methyl-D-erythritol 4-phosphate (MEP). In Geotalea daltonii (strain DSM 22248 / JCM 15807 / FRC-32) (Geobacter daltonii), this protein is 1-deoxy-D-xylulose 5-phosphate reductoisomerase.